We begin with the raw amino-acid sequence, 352 residues long: Uroporphyrinogen decarboxylase (352 aa).

Substrate is bound by residues 26–30, aspartate 76, tyrosine 153, serine 208, and histidine 323; that span reads RQAGR.

It belongs to the uroporphyrinogen decarboxylase family. Homodimer.

It is found in the cytoplasm. The enzyme catalyses uroporphyrinogen III + 4 H(+) = coproporphyrinogen III + 4 CO2. It functions in the pathway porphyrin-containing compound metabolism; protoporphyrin-IX biosynthesis; coproporphyrinogen-III from 5-aminolevulinate: step 4/4. Its function is as follows. Catalyzes the decarboxylation of four acetate groups of uroporphyrinogen-III to yield coproporphyrinogen-III. This Prochlorococcus marinus (strain NATL1A) protein is Uroporphyrinogen decarboxylase.